The following is a 538-amino-acid chain: Atos homolog protein B (538 aa).

Low complexity predominate over residues 1 to 18 (MRHVQAEPSPSSEPEAGP). Disordered stretches follow at residues 1–103 (MRHV…GLLG), 153–185 (NTLHTRDWASPDPGGQGSLGESPGPAPPGQLHT), 197–300 (GGKS…VLDP), and 323–342 (SLRKGPGLLSPPSASPVPTP). A compositionally biased stretch (pro residues) spans 227–238 (HTPPGPGPPGPC). S254 and S255 each carry phosphoserine. The segment covering 323–334 (SLRKGPGLLSPP) has biased composition (low complexity). The required for macropage invasion stretch occupies residues 348–430 (LLGSFEESLL…VPKVGTIQVT (83 aa)). Residues 436–444 (QTVVKMFLV) are transactivation domain 1 (TAD1).

It belongs to the ATOS family.

It localises to the nucleus. Transcription regulator that may syncronize transcriptional and translational programs. This is Atos homolog protein B from Pongo abelii (Sumatran orangutan).